The sequence spans 630 residues: 1-deoxy-D-xylulose-5-phosphate synthase (630 aa).

Residues H74 and 115 to 117 (GHA) contribute to the thiamine diphosphate site. D146 serves as a coordination point for Mg(2+). Thiamine diphosphate contacts are provided by residues 147-148 (AA), N175, F284, and E364. N175 contributes to the Mg(2+) binding site.

It belongs to the transketolase family. DXPS subfamily. Homodimer. Requires Mg(2+) as cofactor. The cofactor is thiamine diphosphate.

The enzyme catalyses D-glyceraldehyde 3-phosphate + pyruvate + H(+) = 1-deoxy-D-xylulose 5-phosphate + CO2. It functions in the pathway metabolic intermediate biosynthesis; 1-deoxy-D-xylulose 5-phosphate biosynthesis; 1-deoxy-D-xylulose 5-phosphate from D-glyceraldehyde 3-phosphate and pyruvate: step 1/1. In terms of biological role, catalyzes the acyloin condensation reaction between C atoms 2 and 3 of pyruvate and glyceraldehyde 3-phosphate to yield 1-deoxy-D-xylulose-5-phosphate (DXP). This chain is 1-deoxy-D-xylulose-5-phosphate synthase, found in Methylacidiphilum infernorum (isolate V4) (Methylokorus infernorum (strain V4)).